A 660-amino-acid chain; its full sequence is Leucine-rich repeat transmembrane protein FLRT2 (660 aa).

A signal peptide spans 1–35; the sequence is MGLQTAKWPSHGTFVLKFWLIMSLGLYSHVSKLLA. 2 disulfides stabilise this stretch: Cys-36/Cys-42 and Cys-40/Cys-49. The region spanning 36-67 is the LRRNT domain; the sequence is CPSVCRCDRNFVYCNERSLTSVPLGIPEGVTV. At 36 to 540 the chain is on the extracellular side; the sequence is CPSVCRCDRN…QTTSHTMGSP (505 aa). 10 LRR repeats span residues 62-87, 88-108, 109-131, 132-157, 159-181, 183-202, 203-228, 229-251, 252-274, and 275-298; these read PEGVTVLYLHNNQINNAGFPAELHNV, QSVHTVYLYGNQLDEFPMNLP, KNVRVLHLQENNIQTISRAALAQ, LLKLEELHLDDNSISTVGVEDGAFRE, ISLKLLFLSKNHLSSVPVGLPVD, QELRVDENRIAVISDMAFQN, LTSLERLIVDGNLLTNKGIADGTFSH, LTKLKEFSIVRNSLSHPPPDLPG, THLIRLYLQDNQINHIPLTAFAN, and LRKLERLDISNNQLRMLTQGVFDH. Residue Asn-202 is glycosylated (N-linked (GlcNAc...) asparagine). 2 disulfides stabilise this stretch: Cys-314–Cys-339 and Cys-316–Cys-360. Residues 338–361 form the LRRCT domain; that stretch reads MCQGPEQVRGMAVRELNMNLLSCP. Residues 372 to 396 are compositionally biased toward low complexity; that stretch reads PAPSTVSPTTQSPTVSVPSPSRGSV. The interval 372-413 is disordered; the sequence is PAPSTVSPTTQSPTVSVPSPSRGSVPPAPAPSKLPTIPDWDG. Residues 419–517 enclose the Fibronectin type-III domain; that stretch reads PPISERIQLS…ICSEATTHAS (99 aa). Residues 541 to 561 form a helical membrane-spanning segment; it reads FLLAGLIGGAVIFVLVVLLSV. Residues 562 to 660 lie on the Cytoplasmic side of the membrane; it reads FCWHMHKKGR…SVPDLEHCHT (99 aa).

In terms of assembly, self-associates (via leucine-rich repeats), giving rise to homooligomers. Interacts with FGFR1. Interacts with FGFR2. Interacts (via extracellular domain) with ADGRL1/LPHN1. Interacts (via extracellular domain) with ADGRL3 (via olfactomedin-like domain). Interacts (via extracellular domain) with UNC5D (via the first Ig-like domain). Can also interact (via extracellular domain) with UNC5B, but with much lower affinity. Interacts (via extracellular domain) with FN1. In terms of processing, N-glycosylated. Proteolytic cleavage in the juxtamembrane region gives rise to a soluble ectodomain. Cleavage is probably effected by a metalloprotease. As to expression, detected in brain (at protein level).

Its subcellular location is the cell membrane. The protein resides in the endoplasmic reticulum membrane. It is found in the synapse. The protein localises to the synaptosome. It localises to the cell junction. Its subcellular location is the focal adhesion. The protein resides in the secreted. It is found in the extracellular space. The protein localises to the extracellular matrix. It localises to the microsome membrane. Functions in cell-cell adhesion, cell migration and axon guidance. Mediates cell-cell adhesion via its interactions with ADGRL3 and probably also other latrophilins that are expressed at the surface of adjacent cells. May play a role in the migration of cortical neurons during brain development via its interaction with UNC5D. Mediates axon growth cone collapse and plays a repulsive role in neuron guidance via its interaction with UNC5D, and possibly also other UNC-5 family members. Plays a role in fibroblast growth factor-mediated signaling cascades. Required for normal organization of the cardiac basement membrane during embryogenesis, and for normal embryonic epicardium and heart morphogenesis. The chain is Leucine-rich repeat transmembrane protein FLRT2 from Rattus norvegicus (Rat).